We begin with the raw amino-acid sequence, 181 residues long: Malignant T-cell-amplified sequence 1-B (181 aa).

Residues 92-171 (LPHQQVDKGA…IGIENIHYLN (80 aa)) enclose the PUA domain.

It belongs to the MCTS1 family.

Its subcellular location is the cytoplasm. Plays a role as translation enhancer and involved in cell cycle regulation. The protein is Malignant T-cell-amplified sequence 1-B (mcts1-b) of Xenopus laevis (African clawed frog).